A 421-amino-acid polypeptide reads, in one-letter code: Divalent metal cation transporter MntH (421 aa).

11 consecutive transmembrane segments (helical) span residues leucine 27–isoleucine 47, serine 51–leucine 71, tryptophan 100–glycine 120, leucine 128–valine 148, glycine 160–alanine 180, alanine 201–histidine 221, isoleucine 248–alanine 268, proline 289–serine 309, leucine 337–leucine 357, isoleucine 358–isoleucine 378, and isoleucine 396–threonine 416.

The protein belongs to the NRAMP family.

It localises to the cell membrane. In terms of biological role, h(+)-stimulated, divalent metal cation uptake system. The chain is Divalent metal cation transporter MntH from Caldanaerobacter subterraneus subsp. tengcongensis (strain DSM 15242 / JCM 11007 / NBRC 100824 / MB4) (Thermoanaerobacter tengcongensis).